Here is a 452-residue protein sequence, read N- to C-terminus: DNA primase DnaG (452 aa).

One can recognise a Toprim domain in the interval 172–248 (DTVIIVEGRA…DIDYIARAPP (77 aa)). Mg(2+) contacts are provided by Glu178, Asp222, and Asp224. Residues 289 to 320 (KKQIEQAQVQPSAAPTSPQPQPESTQPTQPIQ) are disordered. Residues 294-320 (QAQVQPSAAPTSPQPQPESTQPTQPIQ) are compositionally biased toward low complexity.

The protein belongs to the archaeal DnaG primase family. As to quaternary structure, forms a ternary complex with MCM helicase and DNA. Component of the archaeal exosome complex. Requires Mg(2+) as cofactor.

The enzyme catalyses ssDNA + n NTP = ssDNA/pppN(pN)n-1 hybrid + (n-1) diphosphate.. In terms of biological role, RNA polymerase that catalyzes the synthesis of short RNA molecules used as primers for DNA polymerase during DNA replication. Also part of the exosome, which is a complex involved in RNA degradation. Acts as a poly(A)-binding protein that enhances the interaction between heteromeric, adenine-rich transcripts and the exosome. In Caldivirga maquilingensis (strain ATCC 700844 / DSM 13496 / JCM 10307 / IC-167), this protein is DNA primase DnaG.